Reading from the N-terminus, the 231-residue chain is Flagellar L-ring protein (231 aa).

The signal sequence occupies residues 1–18; that stretch reads MNRFICVLALSGSAVLAG. Cys19 carries N-palmitoyl cysteine lipidation. Residue Cys19 is the site of S-diacylglycerol cysteine attachment.

It belongs to the FlgH family. As to quaternary structure, the basal body constitutes a major portion of the flagellar organelle and consists of four rings (L,P,S, and M) mounted on a central rod.

The protein localises to the cell outer membrane. The protein resides in the bacterial flagellum basal body. Assembles around the rod to form the L-ring and probably protects the motor/basal body from shearing forces during rotation. This is Flagellar L-ring protein from Pseudomonas fluorescens (strain ATCC BAA-477 / NRRL B-23932 / Pf-5).